A 300-amino-acid chain; its full sequence is 4-hydroxy-tetrahydrodipicolinate synthase (300 aa).

Thr-45 serves as a coordination point for pyruvate. The active-site Proton donor/acceptor is Tyr-140. Lys-169 functions as the Schiff-base intermediate with substrate in the catalytic mechanism. Residue Ile-210 coordinates pyruvate.

It belongs to the DapA family. Homotetramer; dimer of dimers.

Its subcellular location is the cytoplasm. The enzyme catalyses L-aspartate 4-semialdehyde + pyruvate = (2S,4S)-4-hydroxy-2,3,4,5-tetrahydrodipicolinate + H2O + H(+). It functions in the pathway amino-acid biosynthesis; L-lysine biosynthesis via DAP pathway; (S)-tetrahydrodipicolinate from L-aspartate: step 3/4. Its function is as follows. Catalyzes the condensation of (S)-aspartate-beta-semialdehyde [(S)-ASA] and pyruvate to 4-hydroxy-tetrahydrodipicolinate (HTPA). This Helicobacter pylori (strain P12) protein is 4-hydroxy-tetrahydrodipicolinate synthase.